We begin with the raw amino-acid sequence, 356 residues long: uncharacterized protein (356 aa).

It localises to the cytoplasm. The protein localises to the nucleus. This is an uncharacterized protein from Saccharomyces cerevisiae (strain ATCC 204508 / S288c) (Baker's yeast).